Reading from the N-terminus, the 312-residue chain is Phosphoribosylaminoimidazole-succinocarboxamide synthase (312 aa).

This sequence belongs to the SAICAR synthetase family.

It catalyses the reaction 5-amino-1-(5-phospho-D-ribosyl)imidazole-4-carboxylate + L-aspartate + ATP = (2S)-2-[5-amino-1-(5-phospho-beta-D-ribosyl)imidazole-4-carboxamido]succinate + ADP + phosphate + 2 H(+). It participates in purine metabolism; IMP biosynthesis via de novo pathway; 5-amino-1-(5-phospho-D-ribosyl)imidazole-4-carboxamide from 5-amino-1-(5-phospho-D-ribosyl)imidazole-4-carboxylate: step 1/2. This chain is Phosphoribosylaminoimidazole-succinocarboxamide synthase, found in Legionella pneumophila (strain Paris).